The primary structure comprises 247 residues: tRNA pseudouridine synthase A (247 aa).

The Nucleophile role is filled by Asp-52. Position 111 (Tyr-111) interacts with substrate.

The protein belongs to the tRNA pseudouridine synthase TruA family. Homodimer.

It catalyses the reaction uridine(38/39/40) in tRNA = pseudouridine(38/39/40) in tRNA. Its function is as follows. Formation of pseudouridine at positions 38, 39 and 40 in the anticodon stem and loop of transfer RNAs. In Erythrobacter litoralis (strain HTCC2594), this protein is tRNA pseudouridine synthase A.